The sequence spans 355 residues: Guanine nucleotide-binding protein G(i) subunit alpha-2 (355 aa).

G2 carries the N-myristoyl glycine lipid modification. A lipid anchor (S-palmitoyl cysteine) is attached at C3. A G-alpha domain is found at 32 to 355 (REVKLLLLGA…KNNLKDCGLF (324 aa)). The interval 35 to 48 (KLLLLGAGESGKST) is G1 motif. Residues 40–47 (GAGESGKS), 176–182 (LRTRVKT), 201–205 (DVGGQ), 270–273 (NKKD), and A327 each bind GTP. Mg(2+)-binding residues include S47 and T182. Residues 174–182 (DVLRTRVKT) form a G2 motif region. The tract at residues 197-206 (FKMFDVGGQR) is G3 motif. The interval 266-273 (ILFLNKKD) is G4 motif. The tract at residues 325-330 (TCATDT) is G5 motif.

It belongs to the G-alpha family. G(i/o/t/z) subfamily. In terms of assembly, g proteins are composed of 3 units; alpha, beta and gamma. The alpha chain contains the guanine nucleotide binding site. In this context, interacts with GNB2. Interacts with UNC5B. Interacts with GPSM1. Interacts with RGS12 and RGS14. Interacts (inactive GDP-bound form) with NUCB1 (via GBA motif); the interaction leads to activation of GNAI3. Interacts (inactive GDP-bound form) with CCDC88C/DAPLE (via GBA motif). Interacts (inactive GDP-bound form) with CCDC8A/GIV (via GBA motif). Interacts with CXCR1 and CXCR2.

The protein localises to the cytoplasm. Its subcellular location is the cytoskeleton. It localises to the microtubule organizing center. The protein resides in the centrosome. It is found in the cell membrane. The protein localises to the membrane. Functionally, guanine nucleotide-binding proteins (G proteins) are involved as modulators or transducers in various transmembrane signaling systems. The G(i) proteins are involved in hormonal regulation of adenylate cyclase: they inhibit the cyclase in response to beta-adrenergic stimuli. May play a role in cell division. In Mus musculus (Mouse), this protein is Guanine nucleotide-binding protein G(i) subunit alpha-2 (Gnai2).